The primary structure comprises 347 residues: MDIKEELEELKKKVSVEIDKSSSVDLIENIRVHLLGKKGDLTKILKGLKDLDPREKPVVGQMANKIRTQLETMISQKKHILEENKLDAQLASEKIDVTLPGETFQIGTKHVLQQIQDQIEDHFLSQGYQVMYGREIETDEYNFERMNLPKDHPARGMQDTFYLTPNVLLRTQTSAMQARAMDKHDFSTGPLKMISPGKVYRRDNDDATHSHQFHQIEGLVVGKKITLADLKGTLQALTDELFGKGHAMRFRQSYFPFTEPSLEVDISWNTVDKNTASQDIEWIEVLGAGMVHPNVLKMANIDPEEYSGFAFGLGPDRFAMIKYGIDDIRNFYLDDLRFLKQFCQVGE.

Glu-259 is a binding site for Mg(2+).

This sequence belongs to the class-II aminoacyl-tRNA synthetase family. Phe-tRNA synthetase alpha subunit type 1 subfamily. In terms of assembly, tetramer of two alpha and two beta subunits. The cofactor is Mg(2+).

The protein localises to the cytoplasm. The catalysed reaction is tRNA(Phe) + L-phenylalanine + ATP = L-phenylalanyl-tRNA(Phe) + AMP + diphosphate + H(+). This chain is Phenylalanine--tRNA ligase alpha subunit, found in Oenococcus oeni (strain ATCC BAA-331 / PSU-1).